The following is a 254-amino-acid chain: Trans-aconitate 2-methyltransferase (254 aa).

Belongs to the methyltransferase superfamily. Tam family.

It localises to the cytoplasm. It carries out the reaction trans-aconitate + S-adenosyl-L-methionine = (E)-3-(methoxycarbonyl)pent-2-enedioate + S-adenosyl-L-homocysteine. Its function is as follows. Catalyzes the S-adenosylmethionine monomethyl esterification of trans-aconitate. The polypeptide is Trans-aconitate 2-methyltransferase (Rhodococcus jostii (strain RHA1)).